A 238-amino-acid polypeptide reads, in one-letter code: ATP synthase subunit a (238 aa).

Helical transmembrane passes span 18 to 38, 76 to 96, 114 to 134, 166 to 186, and 193 to 213; these read LTLLAVCIVTIAIVFAFVFWA, YSLLLFTIFLFVAVANNLGLF, NLAFDLALSLFITLMVHIEGV, SLAIRLFGNIFAGEVVTGLIV, and VYWWPIAFLVNMAWTAFSVFI.

This sequence belongs to the ATPase A chain family. F-type ATPases have 2 components, CF(1) - the catalytic core - and CF(0) - the membrane proton channel. CF(1) has five subunits: alpha(3), beta(3), gamma(1), delta(1), epsilon(1). CF(0) has three main subunits: a(1), b(2) and c(9-12). The alpha and beta chains form an alternating ring which encloses part of the gamma chain. CF(1) is attached to CF(0) by a central stalk formed by the gamma and epsilon chains, while a peripheral stalk is formed by the delta and b chains.

The protein resides in the cell membrane. In terms of biological role, key component of the proton channel; it plays a direct role in the translocation of protons across the membrane. In Streptococcus pyogenes serotype M1, this protein is ATP synthase subunit a.